A 463-amino-acid polypeptide reads, in one-letter code: ATP-dependent protease ATPase subunit HslU (463 aa).

ATP contacts are provided by residues Ile-19, 61-66 (GVGKTE), Asp-277, Glu-341, and Arg-413.

This sequence belongs to the ClpX chaperone family. HslU subfamily. As to quaternary structure, a double ring-shaped homohexamer of HslV is capped on each side by a ring-shaped HslU homohexamer. The assembly of the HslU/HslV complex is dependent on binding of ATP.

It localises to the cytoplasm. Its function is as follows. ATPase subunit of a proteasome-like degradation complex; this subunit has chaperone activity. The binding of ATP and its subsequent hydrolysis by HslU are essential for unfolding of protein substrates subsequently hydrolyzed by HslV. HslU recognizes the N-terminal part of its protein substrates and unfolds these before they are guided to HslV for hydrolysis. The polypeptide is ATP-dependent protease ATPase subunit HslU (Bacillus cereus (strain 03BB102)).